Here is an 89-residue protein sequence, read N- to C-terminus: MLRNSRKIFTGNVVSDKMNKTITVVVNVYKKDLLYGKIVKKSRKFYVHDETEKAKKGNLISFMETRPLSKTKKFRLLKIIFSNDKDKKQ.

This sequence belongs to the universal ribosomal protein uS17 family. As to quaternary structure, part of the 30S ribosomal subunit.

One of the primary rRNA binding proteins, it binds specifically to the 5'-end of 16S ribosomal RNA. In Phytoplasma mali (strain AT), this protein is Small ribosomal subunit protein uS17.